The sequence spans 219 residues: Sugar transporter SWEET1 (219 aa).

7 consecutive transmembrane segments (helical) span residues 3–23, 38–58, 63–83, 98–118, 125–145, 156–176, and 189–209; these read FLQL…TTGL, VQFL…YYGL, GTVI…IATY, LLMV…ISPG, LGLT…ADLL, LSFS…LYGL, and PGIF…AVIP. Residues 5–90 form the MtN3/slv 1 domain; the sequence is QLLSCACIIF…ATYCHYTKEK (86 aa). Residues 124 to 204 form the MtN3/slv 2 domain; the sequence is QLGLTCSVFT…LIRFFLFWWF (81 aa).

It belongs to the SWEET sugar transporter family.

The protein resides in the golgi apparatus membrane. Its subcellular location is the cell membrane. Functionally, mediates sugar transport across membranes. This is Sugar transporter SWEET1 (slc50a1) from Danio rerio (Zebrafish).